The primary structure comprises 94 residues: MCYGHNQSLSSRSSLRRRSHDGEDDSVVDDLRDRLAETEARLRRARAREAELSRRLEHMKRFVSVMEIIETFLERRFQEQKDRIARLFSPVSTK.

Residues 1–27 (MCYGHNQSLSSRSSLRRRSHDGEDDSV) form a disordered region. Positions 23–61 (EDDSVVDDLRDRLAETEARLRRARAREAELSRRLEHMKR) form a coiled coil.

As to quaternary structure, interacts with SPK1B/ASK2.

The protein is Protein SKIP34 (SKIP34) of Arabidopsis thaliana (Mouse-ear cress).